The following is a 161-amino-acid chain: MNIRIGHGFDVHKFGGELPLILGGVEVPYDTGLVAHSDGDVVLHAISDAILGAMALGDIGKHFPDTDPDFKGADSRVLLRHCYQLALDKGYRLGNLDVTIIAQAPKMLPHIQAIRECLSADLESDIEAINVKATTTEKLGFTGRKEGIAVEAVVLMCAAPR.

A divalent metal cation contacts are provided by Asp10 and His12. Residues 10–12 (DVH) and 36–37 (HS) contribute to the 4-CDP-2-C-methyl-D-erythritol 2-phosphate site. Position 44 (His44) interacts with a divalent metal cation. 4-CDP-2-C-methyl-D-erythritol 2-phosphate contacts are provided by residues 58–60 (DIG), 63–67 (FPDTD), 102–108 (AQAPKML), 134–137 (TTTE), Phe141, and Arg144.

Belongs to the IspF family. Homotrimer. The cofactor is a divalent metal cation.

The enzyme catalyses 4-CDP-2-C-methyl-D-erythritol 2-phosphate = 2-C-methyl-D-erythritol 2,4-cyclic diphosphate + CMP. It functions in the pathway isoprenoid biosynthesis; isopentenyl diphosphate biosynthesis via DXP pathway; isopentenyl diphosphate from 1-deoxy-D-xylulose 5-phosphate: step 4/6. In terms of biological role, involved in the biosynthesis of isopentenyl diphosphate (IPP) and dimethylallyl diphosphate (DMAPP), two major building blocks of isoprenoid compounds. Catalyzes the conversion of 4-diphosphocytidyl-2-C-methyl-D-erythritol 2-phosphate (CDP-ME2P) to 2-C-methyl-D-erythritol 2,4-cyclodiphosphate (ME-CPP) with a corresponding release of cytidine 5-monophosphate (CMP). The sequence is that of 2-C-methyl-D-erythritol 2,4-cyclodiphosphate synthase from Shewanella loihica (strain ATCC BAA-1088 / PV-4).